The chain runs to 272 residues: Phosphatidylglycerol--prolipoprotein diacylglyceryl transferase (272 aa).

A run of 4 helical transmembrane segments spans residues 15-35 (LGPL…LVLF), 53-73 (AFAV…WHVV), 94-114 (GLGF…IAKI), and 117-137 (VPPF…LCFA). An a 1,2-diacyl-sn-glycero-3-phospho-(1'-sn-glycerol)-binding site is contributed by Arg-138. 3 consecutive transmembrane segments (helical) span residues 174-194 (FHPI…ILLV), 199-219 (VFVK…VLYG), and 237-257 (FGLD…VLIA).

It belongs to the Lgt family.

The protein resides in the cell membrane. It catalyses the reaction L-cysteinyl-[prolipoprotein] + a 1,2-diacyl-sn-glycero-3-phospho-(1'-sn-glycerol) = an S-1,2-diacyl-sn-glyceryl-L-cysteinyl-[prolipoprotein] + sn-glycerol 1-phosphate + H(+). It functions in the pathway protein modification; lipoprotein biosynthesis (diacylglyceryl transfer). In terms of biological role, catalyzes the transfer of the diacylglyceryl group from phosphatidylglycerol to the sulfhydryl group of the N-terminal cysteine of a prolipoprotein, the first step in the formation of mature lipoproteins. The polypeptide is Phosphatidylglycerol--prolipoprotein diacylglyceryl transferase (Tropheryma whipplei (strain TW08/27) (Whipple's bacillus)).